The following is a 35-amino-acid chain: GLSRPSKRCIAGGQPCEFHRGYMCCSEHCIIFVCA.

The propeptide occupies 1-8 (GLSRPSKR). Disulfide bonds link C9–C25, C16–C29, and C24–C34.

The protein belongs to the conotoxin O1 superfamily. In terms of tissue distribution, expressed by the venom duct.

The protein localises to the secreted. Functionally, probable neurotoxin with unknown target. Possibly targets ion channels. This Californiconus californicus (California cone) protein is Conotoxin Cal6.1g.